We begin with the raw amino-acid sequence, 846 residues long: Putative transcriptional regulator tpeD (846 aa).

Residues 104 to 166 form a BED-type; degenerate zinc finger; the sequence is KHQSECWQHF…NCRKSVPVSK (63 aa). The interval 734-846 is disordered; that stretch reads RAREERDAQQ…RDEDFVYETP (113 aa). The span at 756 to 769 shows a compositional bias: acidic residues; sequence PISDSEEAESEDES. The segment covering 773–786 has biased composition (low complexity); that stretch reads PQSPQASQARSQRS. The span at 797–809 shows a compositional bias: acidic residues; sequence PLIELDGNEEDEV.

It localises to the nucleus. Functionally, putative transcriptional regulator; part of the gene cluster that mediates the biosynthesis of polyesters containing 2,4-dihydroxy-6-(2-hydroxypropyl)benzoate and 3-hydroxybutyrate moieties, such as talapolyester G, 15G256beta and 15G256beta-2; as well as to oxidized derivatives such as 15G256alpha. The chain is Putative transcriptional regulator tpeD from Talaromyces stipitatus (strain ATCC 10500 / CBS 375.48 / QM 6759 / NRRL 1006) (Penicillium stipitatum).